Consider the following 305-residue polypeptide: Probable 2-methylisocitrate lyase 1 (305 aa).

Residue 52–54 coordinates substrate; that stretch reads SGA. Positions 91 and 93 each coordinate Mg(2+). Residues 128 to 129, R163, E193, 216 to 218, R247, and R276 each bind substrate; these read CG and NMT.

Belongs to the isocitrate lyase/PEP mutase superfamily. Methylisocitrate lyase family. In terms of assembly, homotetramer; dimer of dimers. Mg(2+) is required as a cofactor.

The enzyme catalyses (2S,3R)-3-hydroxybutane-1,2,3-tricarboxylate = pyruvate + succinate. Its function is as follows. Catalyzes the thermodynamically favored C-C bond cleavage of (2R,3S)-2-methylisocitrate to yield pyruvate and succinate via an alpha-carboxy-carbanion intermediate. The sequence is that of Probable 2-methylisocitrate lyase 1 from Corynebacterium glutamicum (strain ATCC 13032 / DSM 20300 / JCM 1318 / BCRC 11384 / CCUG 27702 / LMG 3730 / NBRC 12168 / NCIMB 10025 / NRRL B-2784 / 534).